A 281-amino-acid chain; its full sequence is ATP phosphoribosyltransferase (281 aa).

Belongs to the ATP phosphoribosyltransferase family. Long subfamily. Mg(2+) serves as cofactor.

The protein resides in the cytoplasm. It carries out the reaction 1-(5-phospho-beta-D-ribosyl)-ATP + diphosphate = 5-phospho-alpha-D-ribose 1-diphosphate + ATP. It participates in amino-acid biosynthesis; L-histidine biosynthesis; L-histidine from 5-phospho-alpha-D-ribose 1-diphosphate: step 1/9. Feedback inhibited by histidine. Functionally, catalyzes the condensation of ATP and 5-phosphoribose 1-diphosphate to form N'-(5'-phosphoribosyl)-ATP (PR-ATP). Has a crucial role in the pathway because the rate of histidine biosynthesis seems to be controlled primarily by regulation of HisG enzymatic activity. This Corynebacterium efficiens (strain DSM 44549 / YS-314 / AJ 12310 / JCM 11189 / NBRC 100395) protein is ATP phosphoribosyltransferase.